Here is a 603-residue protein sequence, read N- to C-terminus: UPF0313 protein MJ1155 (603 aa).

Residues 285 to 557 (GIVPVQFSVV…KIQKAICLYR (273 aa)) form the Radical SAM core domain. Positions 299, 303, and 306 each coordinate [4Fe-4S] cluster.

Belongs to the UPF0313 family. It depends on [4Fe-4S] cluster as a cofactor.

This Methanocaldococcus jannaschii (strain ATCC 43067 / DSM 2661 / JAL-1 / JCM 10045 / NBRC 100440) (Methanococcus jannaschii) protein is UPF0313 protein MJ1155.